The primary structure comprises 262 residues: Mlc titration factor A (262 aa).

The Zn(2+) site is built by His111, His148, His152, and Glu211.

This sequence belongs to the MtfA family. As to quaternary structure, interacts with Mlc. Zn(2+) serves as cofactor.

The protein resides in the cytoplasm. In terms of biological role, involved in the modulation of the activity of the glucose-phosphotransferase system (glucose-PTS). Interacts with the transcriptional repressor Mlc, preventing its interaction with DNA and leading to the modulation of expression of genes regulated by Mlc, including ptsG, which encodes the PTS system glucose-specific EIICB component. Functionally, shows zinc-dependent metallopeptidase activity. This is Mlc titration factor A from Serratia proteamaculans (strain 568).